The following is a 319-amino-acid chain: Putative ribose-phosphate pyrophosphokinase 2 (319 aa).

ATP contacts are provided by residues 40 to 42 (DGE) and 99 to 100 (RQ). Histidine 133 is a Mg(2+) binding site. D-ribose 5-phosphate is bound by residues aspartate 222 and 226–230 (NTGRT).

The protein belongs to the ribose-phosphate pyrophosphokinase family. Class I subfamily. Homohexamer. Mg(2+) serves as cofactor.

Its subcellular location is the cytoplasm. It carries out the reaction D-ribose 5-phosphate + ATP = 5-phospho-alpha-D-ribose 1-diphosphate + AMP + H(+). It functions in the pathway metabolic intermediate biosynthesis; 5-phospho-alpha-D-ribose 1-diphosphate biosynthesis; 5-phospho-alpha-D-ribose 1-diphosphate from D-ribose 5-phosphate (route I): step 1/1. Functionally, involved in the biosynthesis of the central metabolite phospho-alpha-D-ribosyl-1-pyrophosphate (PRPP) via the transfer of pyrophosphoryl group from ATP to 1-hydroxyl of ribose-5-phosphate (Rib-5-P). This is Putative ribose-phosphate pyrophosphokinase 2 from Streptococcus pneumoniae serotype 4 (strain ATCC BAA-334 / TIGR4).